A 318-amino-acid polypeptide reads, in one-letter code: Acetyl-coenzyme A carboxylase carboxyl transferase subunit alpha (318 aa).

The 259-residue stretch at Arg39–Lys297 folds into the CoA carboxyltransferase C-terminal domain.

It belongs to the AccA family. In terms of assembly, acetyl-CoA carboxylase is a heterohexamer composed of biotin carboxyl carrier protein (AccB), biotin carboxylase (AccC) and two subunits each of ACCase subunit alpha (AccA) and ACCase subunit beta (AccD).

Its subcellular location is the cytoplasm. It catalyses the reaction N(6)-carboxybiotinyl-L-lysyl-[protein] + acetyl-CoA = N(6)-biotinyl-L-lysyl-[protein] + malonyl-CoA. It participates in lipid metabolism; malonyl-CoA biosynthesis; malonyl-CoA from acetyl-CoA: step 1/1. In terms of biological role, component of the acetyl coenzyme A carboxylase (ACC) complex. First, biotin carboxylase catalyzes the carboxylation of biotin on its carrier protein (BCCP) and then the CO(2) group is transferred by the carboxyltransferase to acetyl-CoA to form malonyl-CoA. The chain is Acetyl-coenzyme A carboxylase carboxyl transferase subunit alpha from Bartonella tribocorum (strain CIP 105476 / IBS 506).